The sequence spans 353 residues: Photosystem II protein D1 (353 aa).

Threonine 2 is modified (N-acetylthreonine). Phosphothreonine is present on threonine 2. The next 3 helical transmembrane spans lie at 29–46 (YIGW…TATS), 118–133 (HFLL…EWEL), and 142–156 (WIAV…AAAA). Histidine 118 provides a ligand contact to chlorophyll a. Tyrosine 126 lines the pheophytin a pocket. Aspartate 170 and glutamate 189 together coordinate [CaMn4O5] cluster. The chain crosses the membrane as a helical span at residues 197–218 (FHMLGVAGVFGGSLFSAMHGSL). Histidine 198 serves as a coordination point for chlorophyll a. Residues histidine 215 and 264 to 265 (SF) contribute to the a quinone site. Histidine 215 is a binding site for Fe cation. A Fe cation-binding site is contributed by histidine 272. Residues 274-288 (FLAAWPVVGIWFTAL) traverse the membrane as a helical segment. [CaMn4O5] cluster is bound by residues histidine 332, glutamate 333, aspartate 342, and alanine 344. A propeptide spanning residues 345-353 (AVEAPSTNG) is cleaved from the precursor.

It belongs to the reaction center PufL/M/PsbA/D family. As to quaternary structure, PSII is composed of 1 copy each of membrane proteins PsbA, PsbB, PsbC, PsbD, PsbE, PsbF, PsbH, PsbI, PsbJ, PsbK, PsbL, PsbM, PsbT, PsbX, PsbY, PsbZ, Psb30/Ycf12, at least 3 peripheral proteins of the oxygen-evolving complex and a large number of cofactors. It forms dimeric complexes. It depends on The D1/D2 heterodimer binds P680, chlorophylls that are the primary electron donor of PSII, and subsequent electron acceptors. It shares a non-heme iron and each subunit binds pheophytin, quinone, additional chlorophylls, carotenoids and lipids. D1 provides most of the ligands for the Mn4-Ca-O5 cluster of the oxygen-evolving complex (OEC). There is also a Cl(-1) ion associated with D1 and D2, which is required for oxygen evolution. The PSII complex binds additional chlorophylls, carotenoids and specific lipids. as a cofactor. In terms of processing, tyr-161 forms a radical intermediate that is referred to as redox-active TyrZ, YZ or Y-Z. C-terminally processed by CTPA; processing is essential to allow assembly of the oxygen-evolving complex and thus photosynthetic growth.

The protein localises to the plastid. It localises to the chloroplast thylakoid membrane. It carries out the reaction 2 a plastoquinone + 4 hnu + 2 H2O = 2 a plastoquinol + O2. Photosystem II (PSII) is a light-driven water:plastoquinone oxidoreductase that uses light energy to abstract electrons from H(2)O, generating O(2) and a proton gradient subsequently used for ATP formation. It consists of a core antenna complex that captures photons, and an electron transfer chain that converts photonic excitation into a charge separation. The D1/D2 (PsbA/PsbD) reaction center heterodimer binds P680, the primary electron donor of PSII as well as several subsequent electron acceptors. The polypeptide is Photosystem II protein D1 (Panax ginseng (Korean ginseng)).